The primary structure comprises 483 residues: MSFRLRYAPSPTGFLHIGNTRTALMNYLFAKHYNGSFIVRIEDTDLARNVDGAIESQFENLNWLGIFPDESIFNVGDQKYGKYMQSQKFDRYKQLAEQLVNQNKAYRCFCSSEELEKDYEEQTSKEIIATKYSQKCLFLTQDQISQNLKDKKEYSIRFKVPQNKVWTINDIVRGDVSFDSKDLGDFVILKSNGVATYNFAVVIDDYDMQITHVLRGEEHISNTPRQMMIYDAFNWNYPKFGHLTLIVDNTGKKLSKRSGNALFFIEQYKKQGYLSQAIFNYIALLGWSPPGEQEILSQNELIKIFDEKRFSKSPSTFDMVKMKWINSVYMKKLEDNEYLEFVKSFINTNKFDITSKSEAWLNHLLLLYKKELEYAEQINDHLDLFFNKNTLDNNTIDVLNNLTNYKNVVEIFKNQINDLKDWTIENIKQIIKDTSTLANVKGKDLFMPIRIFATKSEHGPSLADVIYLLGKTTVLNNINSLER.

The 'HIGH' region signature appears at 9-19 (PSPTGFLHIGN). The 'KMSKS' region motif lies at 253–257 (KLSKR). K256 is a binding site for ATP.

Belongs to the class-I aminoacyl-tRNA synthetase family. Glutamate--tRNA ligase type 1 subfamily. Monomer.

The protein localises to the cytoplasm. The catalysed reaction is tRNA(Glu) + L-glutamate + ATP = L-glutamyl-tRNA(Glu) + AMP + diphosphate. Catalyzes the attachment of glutamate to tRNA(Glu) in a two-step reaction: glutamate is first activated by ATP to form Glu-AMP and then transferred to the acceptor end of tRNA(Glu). The sequence is that of Glutamate--tRNA ligase from Mycoplasma mycoides subsp. mycoides SC (strain CCUG 32753 / NCTC 10114 / PG1).